The following is a 118-amino-acid chain: Putative pterin-4-alpha-carbinolamine dehydratase (118 aa).

Belongs to the pterin-4-alpha-carbinolamine dehydratase family.

It catalyses the reaction (4aS,6R)-4a-hydroxy-L-erythro-5,6,7,8-tetrahydrobiopterin = (6R)-L-erythro-6,7-dihydrobiopterin + H2O. In Xanthomonas oryzae pv. oryzae (strain PXO99A), this protein is Putative pterin-4-alpha-carbinolamine dehydratase.